We begin with the raw amino-acid sequence, 195 residues long: Small ribosomal subunit protein uS5 (195 aa).

Positions 22–85 constitute an S5 DRBM domain; it reads IVEKLVHINR…EEAKKSMIRV (64 aa). The disordered stretch occupies residues 164–195; that stretch reads QVAAKRGKKVSDVIGRRADGASAAQPAADAEG. Over residues 172–182 the composition is skewed to basic and acidic residues; the sequence is KVSDVIGRRAD. Over residues 183–195 the composition is skewed to low complexity; sequence GASAAQPAADAEG.

This sequence belongs to the universal ribosomal protein uS5 family. In terms of assembly, part of the 30S ribosomal subunit. Contacts proteins S4 and S8.

In terms of biological role, with S4 and S12 plays an important role in translational accuracy. Its function is as follows. Located at the back of the 30S subunit body where it stabilizes the conformation of the head with respect to the body. This Phenylobacterium zucineum (strain HLK1) protein is Small ribosomal subunit protein uS5.